The sequence spans 146 residues: Globin (146 aa).

Position 1 is an N-acetylalanine (Ala-1). Residues 1–146 enclose the Globin domain; the sequence is ALSAAEAEVV…IIDAMKKAGK (146 aa). A heme b-binding site is contributed by His-95.

It belongs to the globin family. As to quaternary structure, monomer.

In Dolabella auricularia (Shoulderblade sea cat), this protein is Globin.